The chain runs to 272 residues: Probable glutathione S-transferase DHAR2, chloroplastic (272 aa).

The N-terminal 57 residues, 1–57 (MAVLLRTTTSATTATSGGSSSATALLATTFRRGGRRLLLLPATRGSAPRRAALLTAR), are a transit peptide targeting the chloroplast. 2 residues coordinate glutathione: lysine 68 and aspartate 79. Residues lysine 68 and aspartate 79 each contribute to the L-ascorbate site. Residues 70-148 (SLTVPDRLGD…AIEEKYPEPS (79 aa)) form the GST N-terminal domain. Catalysis depends on cysteine 80, which acts as the Nucleophile. The glutathione site is built by lysine 107, valine 120, serine 133, histidine 219, and tryptophan 266. The GST C-terminal domain occupies 126–272 (EEQWVADSDV…IAGWRPKVMG (147 aa)). Lysine 269 lines the L-ascorbate pocket.

Belongs to the GST superfamily. DHAR family. As to quaternary structure, monomer.

Its subcellular location is the plastid. It localises to the chloroplast. It carries out the reaction RX + glutathione = an S-substituted glutathione + a halide anion + H(+). The enzyme catalyses L-dehydroascorbate + 2 glutathione = glutathione disulfide + L-ascorbate. Its function is as follows. Involved in ascorbate homeostasis. Maintains redox pools of ascorbate by recycling dihydroascorbate (DHA) to ascorbate. Involved in scavenging reactive oxygen species (ROS) under oxidative stresses. The chain is Probable glutathione S-transferase DHAR2, chloroplastic from Oryza sativa subsp. japonica (Rice).